We begin with the raw amino-acid sequence, 142 residues long: Hdr-like menaquinol oxidoreductase cytochrome c subunit (142 aa).

At 1–6 (MYNKKY) the chain is on the cytoplasmic side. The chain crosses the membrane as a helical span at residues 7–27 (VIPLILVFLIGFFTPYWYNAM). The Extracellular portion of the chain corresponds to 28 to 142 (AGTLGHVPTL…GIEELSKYFS (115 aa)). The heme site is built by C93, C96, H97, C104, C107, H108, C117, C120, and H121.

As to quaternary structure, consists of five subunits: an integral membrane subunit, a cytochrome b-like subunit, a cytochrome c subunit and two iron-sulfur subunits. Binds 3 heme groups per subunit.

Its subcellular location is the cell membrane. In terms of biological role, has menaquinol-oxidizing activity. HmeA, HmeB and HmeE subunits may together catalyze electron transfer from menaquinol to cytochrome c. This chain is Hdr-like menaquinol oxidoreductase cytochrome c subunit (hmeE), found in Archaeoglobus fulgidus (strain ATCC 49558 / DSM 4304 / JCM 9628 / NBRC 100126 / VC-16).